Consider the following 414-residue polypeptide: tRNA(Ile)-lysidine synthase (414 aa).

Residue 13-18 coordinates ATP; it reads SGGIDS.

The protein belongs to the tRNA(Ile)-lysidine synthase family.

The protein resides in the cytoplasm. The catalysed reaction is cytidine(34) in tRNA(Ile2) + L-lysine + ATP = lysidine(34) in tRNA(Ile2) + AMP + diphosphate + H(+). In terms of biological role, ligates lysine onto the cytidine present at position 34 of the AUA codon-specific tRNA(Ile) that contains the anticodon CAU, in an ATP-dependent manner. Cytidine is converted to lysidine, thus changing the amino acid specificity of the tRNA from methionine to isoleucine. This chain is tRNA(Ile)-lysidine synthase, found in Thermotoga sp. (strain RQ2).